A 198-amino-acid chain; its full sequence is Ribonuclease HII (198 aa).

In terms of domain architecture, RNase H type-2 spans 10 to 198 (HLVAGVDEVG…PVRRALGIAS (189 aa)). A divalent metal cation is bound by residues Asp16, Glu17, and Asp108.

This sequence belongs to the RNase HII family. Mn(2+) serves as cofactor. Mg(2+) is required as a cofactor.

It localises to the cytoplasm. It catalyses the reaction Endonucleolytic cleavage to 5'-phosphomonoester.. Functionally, endonuclease that specifically degrades the RNA of RNA-DNA hybrids. This Cronobacter sakazakii (strain ATCC BAA-894) (Enterobacter sakazakii) protein is Ribonuclease HII.